Here is a 415-residue protein sequence, read N- to C-terminus: Serine hydroxymethyltransferase (415 aa).

(6S)-5,6,7,8-tetrahydrofolate is bound by residues leucine 115 and 119–121 (GHL). N6-(pyridoxal phosphate)lysine is present on lysine 224. Residue 348–350 (SPF) coordinates (6S)-5,6,7,8-tetrahydrofolate.

This sequence belongs to the SHMT family. Homodimer. The cofactor is pyridoxal 5'-phosphate.

It is found in the cytoplasm. It catalyses the reaction (6R)-5,10-methylene-5,6,7,8-tetrahydrofolate + glycine + H2O = (6S)-5,6,7,8-tetrahydrofolate + L-serine. It functions in the pathway one-carbon metabolism; tetrahydrofolate interconversion. It participates in amino-acid biosynthesis; glycine biosynthesis; glycine from L-serine: step 1/1. Its function is as follows. Catalyzes the reversible interconversion of serine and glycine with tetrahydrofolate (THF) serving as the one-carbon carrier. This reaction serves as the major source of one-carbon groups required for the biosynthesis of purines, thymidylate, methionine, and other important biomolecules. Also exhibits THF-independent aldolase activity toward beta-hydroxyamino acids, producing glycine and aldehydes, via a retro-aldol mechanism. The chain is Serine hydroxymethyltransferase from Latilactobacillus sakei subsp. sakei (strain 23K) (Lactobacillus sakei subsp. sakei).